The primary structure comprises 212 residues: Peptide methionine sulfoxide reductase MsrA (212 aa).

The active site involves cysteine 52.

Belongs to the MsrA Met sulfoxide reductase family.

The enzyme catalyses L-methionyl-[protein] + [thioredoxin]-disulfide + H2O = L-methionyl-(S)-S-oxide-[protein] + [thioredoxin]-dithiol. It catalyses the reaction [thioredoxin]-disulfide + L-methionine + H2O = L-methionine (S)-S-oxide + [thioredoxin]-dithiol. In terms of biological role, has an important function as a repair enzyme for proteins that have been inactivated by oxidation. Catalyzes the reversible oxidation-reduction of methionine sulfoxide in proteins to methionine. The protein is Peptide methionine sulfoxide reductase MsrA of Escherichia coli (strain SMS-3-5 / SECEC).